Reading from the N-terminus, the 453-residue chain is F-box/FBD/LRR-repeat protein At4g00160 (453 aa).

One can recognise an F-box domain in the interval 15-68; the sequence is KDRISELPDALLIKILSFLPTKIVVATSVFSKQWRPLWKLVPNLEFDSEDYDDK. 6 LRR repeats span residues 89–111, 165–190, 215–239, 247–270, 282–307, and 331–358; these read LESF…LWVG, MKSL…LLSG, VPSL…VINA, IEDL…IFDG, LTSV…IFYQ, and SPKL…KWNE. The region spanning 355-406 is the FBD domain; the sequence is KWNEPKYVPECLLSHLETFVWRRFDWGREEEKEIATYILKNARRLNKATFST.

The protein is F-box/FBD/LRR-repeat protein At4g00160 of Arabidopsis thaliana (Mouse-ear cress).